A 201-amino-acid chain; its full sequence is Methylated-DNA--protein-cysteine methyltransferase (201 aa).

3 residues coordinate DNA: tyrosine 131, glycine 132, and arginine 146. Catalysis depends on cysteine 163, which acts as the Nucleophile; methyl group acceptor.

This sequence belongs to the MGMT family.

It localises to the nucleus. It catalyses the reaction a 6-O-methyl-2'-deoxyguanosine in DNA + L-cysteinyl-[protein] = S-methyl-L-cysteinyl-[protein] + a 2'-deoxyguanosine in DNA. It carries out the reaction a 4-O-methyl-thymidine in DNA + L-cysteinyl-[protein] = a thymidine in DNA + S-methyl-L-cysteinyl-[protein]. In terms of biological role, involved in the cellular defense against the biological effects of O6-methylguanine (O6-MeG) and O4-methylthymine (O4-MeT) in DNA. Repairs the methylated nucleobase in DNA by stoichiometrically transferring the methyl group to a cysteine residue in the enzyme. This is a suicide reaction: the enzyme is irreversibly inactivated. The protein is Methylated-DNA--protein-cysteine methyltransferase (MGT1) of Lodderomyces elongisporus (strain ATCC 11503 / CBS 2605 / JCM 1781 / NBRC 1676 / NRRL YB-4239) (Yeast).